Here is a 954-residue protein sequence, read N- to C-terminus: Mitogen-activated protein kinase kinase kinase 10 (954 aa).

The region spanning 16–81 is the SH3 domain; that stretch reads PAGPVWTAVF…PSNYVAPGAP (66 aa). In terms of domain architecture, Protein kinase spans 98–360; sequence LQLEEIIGVG…GSILKRLEVI (263 aa). ATP contacts are provided by residues 104–112 and Lys125; that span reads IGVGGFGKV. The active-site Proton acceptor is Asp222. The residue at position 258 (Thr258) is a Phosphothreonine; by autocatalysis. At Ser262 the chain carries Phosphoserine; by autocatalysis and MAP4K1. 2 leucine-zipper regions span residues 384–405 and 419–440; these read IQHM…EEEL and LRRR…ELHL. 3 disordered regions span residues 490–665, 716–739, and 757–954; these read PTLD…RWGH, RFPR…PGLG, and STRS…HGSH. A phosphoserine mark is found at Ser498, Ser502, and Ser506. Over residues 501–511 the composition is skewed to low complexity; the sequence is ASPPASPSIIP. A Phosphothreonine modification is found at Thr558. The span at 566-578 shows a compositional bias: basic and acidic residues; the sequence is QKERVGGEERLKG. Residues 611–620 are compositionally biased toward acidic residues; the sequence is EMEEFAEAED. The segment covering 631-640 has biased composition (low complexity); it reads STPSYLSVPL. A compositionally biased stretch (pro residues) spans 773 to 790; the sequence is APSPPPSPPAPTPTPSPS. Arg857 is subject to Omega-N-methylarginine. Pro residues predominate over residues 913–927; it reads PSRPDTPESPGPPSV.

Belongs to the protein kinase superfamily. STE Ser/Thr protein kinase family. MAP kinase kinase kinase subfamily. Homodimer. Interacts with SH3RF2. The cofactor is Mg(2+). Autophosphorylation on serine and threonine residues within the activation loop plays a role in enzyme activation. As to expression, expressed in brain and skeletal muscle.

It catalyses the reaction L-seryl-[protein] + ATP = O-phospho-L-seryl-[protein] + ADP + H(+). The catalysed reaction is L-threonyl-[protein] + ATP = O-phospho-L-threonyl-[protein] + ADP + H(+). Its activity is regulated as follows. Homodimerization via the leucine zipper domains is required for autophosphorylation and subsequent activation. Functionally, activates the JUN N-terminal pathway. In Homo sapiens (Human), this protein is Mitogen-activated protein kinase kinase kinase 10 (MAP3K10).